A 377-amino-acid polypeptide reads, in one-letter code: 23S rRNA (uracil(747)-C(5))-methyltransferase RlmC (377 aa).

[4Fe-4S] cluster-binding residues include Cys-3, Cys-11, Cys-14, and Cys-87. Positions 212, 241, 262, and 307 each coordinate S-adenosyl-L-methionine. Cys-334 functions as the Nucleophile in the catalytic mechanism.

It belongs to the class I-like SAM-binding methyltransferase superfamily. RNA M5U methyltransferase family. RlmC subfamily.

The catalysed reaction is uridine(747) in 23S rRNA + S-adenosyl-L-methionine = 5-methyluridine(747) in 23S rRNA + S-adenosyl-L-homocysteine + H(+). Its function is as follows. Catalyzes the formation of 5-methyl-uridine at position 747 (m5U747) in 23S rRNA. The sequence is that of 23S rRNA (uracil(747)-C(5))-methyltransferase RlmC from Xenorhabdus bovienii (strain SS-2004) (Xenorhabdus nematophila subsp. bovienii).